The sequence spans 35 residues: MEALVYTFLLVSTLGIIFFAIFFREPPKVPTKKMK.

A helical transmembrane segment spans residues 3–23; the sequence is ALVYTFLLVSTLGIIFFAIFF.

This sequence belongs to the PsbT family. PSII is composed of 1 copy each of membrane proteins PsbA, PsbB, PsbC, PsbD, PsbE, PsbF, PsbH, PsbI, PsbJ, PsbK, PsbL, PsbM, PsbT, PsbY, PsbZ, Psb30/Ycf12, at least 3 peripheral proteins of the oxygen-evolving complex and a large number of cofactors. It forms dimeric complexes.

The protein localises to the plastid. Its subcellular location is the chloroplast thylakoid membrane. Functionally, found at the monomer-monomer interface of the photosystem II (PS II) dimer, plays a role in assembly and dimerization of PSII. PSII is a light-driven water plastoquinone oxidoreductase, using light energy to abstract electrons from H(2)O, generating a proton gradient subsequently used for ATP formation. This is Photosystem II reaction center protein T from Stewartia pseudocamellia (Japanese stewartia).